The following is a 172-amino-acid chain: Trypsin inhibitor 1B (172 aa).

2 cysteine pairs are disulfide-bonded: Cys40-Cys84 and Cys133-Cys139.

Belongs to the protease inhibitor I3 (leguminous Kunitz-type inhibitor) family.

Its function is as follows. WTI-1B inhibits trypsin stoichiometrically. This is Trypsin inhibitor 1B from Psophocarpus tetragonolobus (Winged bean).